We begin with the raw amino-acid sequence, 148 residues long: Insoluble matrix shell protein 1 (148 aa).

Residues 105–128 (KSGRTEARNTDDSGDPIIDPRTAD) are disordered.

As to expression, component of the acid-insoluble organic matrix of the calcified shell.

The protein resides in the secreted. This Ruditapes philippinarum (Japanese carpet shell) protein is Insoluble matrix shell protein 1.